Reading from the N-terminus, the 139-residue chain is Small ribosomal subunit protein uS12 (139 aa).

The tract at residues 12 to 55 is disordered; it reads RVDKVKKSDSPALNKGYNSFKKSQTDVSSPQKRGVCTRVGTMTP. Residues 27–42 are compositionally biased toward polar residues; sequence GYNSFKKSQTDVSSPQ. Asp-102 carries the post-translational modification 3-methylthioaspartic acid. Residues 119–139 are disordered; that stretch reads GVQNRMQGRSKYGTKKPKDKK. The segment covering 130–139 has biased composition (basic residues); the sequence is YGTKKPKDKK.

Belongs to the universal ribosomal protein uS12 family. In terms of assembly, part of the 30S ribosomal subunit. Contacts proteins S8 and S17. May interact with IF1 in the 30S initiation complex.

With S4 and S5 plays an important role in translational accuracy. Its function is as follows. Interacts with and stabilizes bases of the 16S rRNA that are involved in tRNA selection in the A site and with the mRNA backbone. Located at the interface of the 30S and 50S subunits, it traverses the body of the 30S subunit contacting proteins on the other side and probably holding the rRNA structure together. The combined cluster of proteins S8, S12 and S17 appears to hold together the shoulder and platform of the 30S subunit. This Shouchella clausii (strain KSM-K16) (Alkalihalobacillus clausii) protein is Small ribosomal subunit protein uS12.